Consider the following 848-residue polypeptide: Leucine--tRNA ligase (848 aa).

The 'HIGH' region motif lies at 41-51; sequence PYPSGRIHMGH. Residues 619-623 carry the 'KMSKS' region motif; the sequence is KMSKS. ATP is bound at residue K622.

Belongs to the class-I aminoacyl-tRNA synthetase family.

Its subcellular location is the cytoplasm. It carries out the reaction tRNA(Leu) + L-leucine + ATP = L-leucyl-tRNA(Leu) + AMP + diphosphate. This is Leucine--tRNA ligase from Roseobacter denitrificans (strain ATCC 33942 / OCh 114) (Erythrobacter sp. (strain OCh 114)).